Consider the following 163-residue polypeptide: MTVKTLHGPAMVKYLLLSILGLAFLSEAAARKIPKVGHTFFQKPESCPPVPGGSMKLDIGIINENQRVSMSRNIESRSTSPWNYTVTWDPNRYPSEVVQAQCRNLGCINAQGKEDISMNSVPIQQETLVVRRKHQGCSVSFQLEKVLVTVGCTCVTPVIHHVQ.

The signal sequence occupies residues 1–30 (MTVKTLHGPAMVKYLLLSILGLAFLSEAAA). N-linked (GlcNAc...) asparagine glycosylation is present at Asn-83. Disulfide bonds link Cys-102–Cys-152 and Cys-107–Cys-154.

The protein belongs to the IL-17 family. In terms of assembly, homodimer; disulfide-linked. Heterodimer with IL17A (IL17A-IL17F). Forms complexes with IL17RA and IL17RC receptors with 2:1 binding stoichiometry: two receptor chains for one interleukin molecule. IL17F homodimer forms predominantly complexes with IL17RC homodimer, whereas IL17A-IL17F favors complexes with IL17RA-IL17RC. IL17RA and IL17RC chains cannot distinguish between IL17A and IL17F molecules, potentially enabling the formation of topologically distinct complexes. As to expression, expressed in T-helper 1 and T-helper 2 cells, basophils and mast cells.

The protein resides in the secreted. Its function is as follows. Effector cytokine of innate and adaptive immune system involved in antimicrobial host defense and maintenance of tissue integrity. IL17A-IL17F signals via IL17RA-IL17RC heterodimeric receptor complex, triggering homotypic interaction of IL17RA and IL17RC chains with TRAF3IP2 adapter through SEFIR domains. This leads to downstream TRAF6-mediated activation of NF-kappa-B and MAPkinase pathways ultimately resulting in transcriptional activation of cytokines, chemokines, antimicrobial peptides and matrix metalloproteinases, with potential strong immune inflammation. IL17A-IL17F is primarily involved in host defense against extracellular bacteria and fungi by inducing neutrophilic inflammation. As signature effector cytokine of T-helper 17 cells (Th17), primarily induces neutrophil activation and recruitment at infection and inflammatory sites. Stimulates the production of antimicrobial beta-defensins DEFB1, DEFB103A, and DEFB104A by mucosal epithelial cells, limiting the entry of microbes through the epithelial barriers. IL17F homodimer can signal via IL17RC homodimeric receptor complex, triggering downstream activation of TRAF6 and NF-kappa-B signaling pathway. Via IL17RC induces transcriptional activation of IL33, a potent cytokine that stimulates group 2 innate lymphoid cells and adaptive T-helper 2 cells involved in pulmonary allergic response to fungi. Likely via IL17RC, promotes sympathetic innervation of peripheral organs by coordinating the communication between gamma-delta T cells and parenchymal cells. Stimulates sympathetic innervation of thermogenic adipose tissue by driving TGFB1 expression. Regulates the composition of intestinal microbiota and immune tolerance by inducing antimicrobial proteins that specifically control the growth of commensal Firmicutes and Bacteroidetes. The sequence is that of Interleukin-17F (IL17F) from Homo sapiens (Human).